We begin with the raw amino-acid sequence, 144 residues long: Large ribosomal subunit protein uL11m (144 aa).

The transit peptide at 1–32 (MASTRTTIIKLIVPAGKATPTPPIGPALGARG) directs the protein to the mitochondrion.

It belongs to the universal ribosomal protein uL11 family. As to quaternary structure, component of the mitochondrial large ribosomal subunit (mt-LSU). Mature yeast 74S mitochondrial ribosomes consist of a small (37S) and a large (54S) subunit. The 37S small subunit contains a 15S ribosomal RNA (15S mt-rRNA) and at least 32 different proteins. The 54S large subunit contains a 21S rRNA (21S mt-rRNA) and at least 45 different proteins.

The protein resides in the mitochondrion. It localises to the cytoplasm. In terms of biological role, component of the mitochondrial ribosome (mitoribosome), a dedicated translation machinery responsible for the synthesis of mitochondrial genome-encoded proteins, including at least some of the essential transmembrane subunits of the mitochondrial respiratory chain. The mitoribosomes are attached to the mitochondrial inner membrane and translation products are cotranslationally integrated into the membrane. This is Large ribosomal subunit protein uL11m from Schizosaccharomyces pombe (strain 972 / ATCC 24843) (Fission yeast).